The sequence spans 141 residues: Large ribosomal subunit protein uL11 (141 aa).

It belongs to the universal ribosomal protein uL11 family. In terms of assembly, part of the ribosomal stalk of the 50S ribosomal subunit. Interacts with L10 and the large rRNA to form the base of the stalk. L10 forms an elongated spine to which L12 dimers bind in a sequential fashion forming a multimeric L10(L12)X complex. In terms of processing, one or more lysine residues are methylated.

Functionally, forms part of the ribosomal stalk which helps the ribosome interact with GTP-bound translation factors. The chain is Large ribosomal subunit protein uL11 from Streptococcus agalactiae serotype Ia (strain ATCC 27591 / A909 / CDC SS700).